The primary structure comprises 209 residues: Flavin prenyltransferase UbiX (209 aa).

FMN is bound by residues 13–15 (GAS), S39, 104–107 (STGT), C116, and R139. Residues Y169 and R185 each coordinate dimethylallyl phosphate.

The protein belongs to the UbiX/PAD1 family.

The catalysed reaction is dimethylallyl phosphate + FMNH2 = prenylated FMNH2 + phosphate. Functionally, flavin prenyltransferase that catalyzes the synthesis of the prenylated FMN cofactor (prenyl-FMN) for 4-hydroxy-3-polyprenylbenzoic acid decarboxylase UbiD. The prenyltransferase is metal-independent and links a dimethylallyl moiety from dimethylallyl monophosphate (DMAP) to the flavin N5 and C6 atoms of FMN. This Pseudomonas aeruginosa (strain ATCC 15692 / DSM 22644 / CIP 104116 / JCM 14847 / LMG 12228 / 1C / PRS 101 / PAO1) protein is Flavin prenyltransferase UbiX.